A 605-amino-acid polypeptide reads, in one-letter code: Glutamine--fructose-6-phosphate aminotransferase [isomerizing] (605 aa).

The active-site Nucleophile; for GATase activity is Cys2. In terms of domain architecture, Glutamine amidotransferase type-2 spans 2-219 (CGIVGVVGSK…DKELVVLTKD (218 aa)). 2 consecutive SIS domains span residues 285–424 (IIKG…AEGE) and 457–595 (VADL…VDKP). The For Fru-6P isomerization activity role is filled by Lys600.

In terms of assembly, homodimer.

Its subcellular location is the cytoplasm. The catalysed reaction is D-fructose 6-phosphate + L-glutamine = D-glucosamine 6-phosphate + L-glutamate. Its function is as follows. Catalyzes the first step in hexosamine metabolism, converting fructose-6P into glucosamine-6P using glutamine as a nitrogen source. This Lactococcus lactis subsp. lactis (strain IL1403) (Streptococcus lactis) protein is Glutamine--fructose-6-phosphate aminotransferase [isomerizing].